Here is a 118-residue protein sequence, read N- to C-terminus: Large ribosomal subunit protein bL20 (118 aa).

Belongs to the bacterial ribosomal protein bL20 family.

Functionally, binds directly to 23S ribosomal RNA and is necessary for the in vitro assembly process of the 50S ribosomal subunit. It is not involved in the protein synthesizing functions of that subunit. This chain is Large ribosomal subunit protein bL20 (rplT), found in Buchnera aphidicola subsp. Acyrthosiphon pisum (strain APS) (Acyrthosiphon pisum symbiotic bacterium).